Consider the following 310-residue polypeptide: Methionyl-tRNA formyltransferase (310 aa).

109 to 112 lines the (6S)-5,6,7,8-tetrahydrofolate pocket; the sequence is SLLP.

Belongs to the Fmt family.

It carries out the reaction L-methionyl-tRNA(fMet) + (6R)-10-formyltetrahydrofolate = N-formyl-L-methionyl-tRNA(fMet) + (6S)-5,6,7,8-tetrahydrofolate + H(+). Its function is as follows. Attaches a formyl group to the free amino group of methionyl-tRNA(fMet). The formyl group appears to play a dual role in the initiator identity of N-formylmethionyl-tRNA by promoting its recognition by IF2 and preventing the misappropriation of this tRNA by the elongation apparatus. In Staphylococcus epidermidis (strain ATCC 12228 / FDA PCI 1200), this protein is Methionyl-tRNA formyltransferase.